The sequence spans 874 residues: Cap-specific mRNA (nucleoside-2'-O-)-methyltransferase 1A (874 aa).

The segment covering 1-10 (MSERGDDDRT) has biased composition (basic and acidic residues). Residues 1–64 (MSERGDDDRT…APPTKQKTKA (64 aa)) are disordered. Residues 60–106 (QKTKAEEMMERMGYKAGEGLGKNKQGIQEPVALSTQRGKTGLGHEGA) form the G-patch domain. The 230-residue stretch at 211 to 440 (FFQNRAAMKT…ERYITCKGLR (230 aa)) folds into the RrmJ-type SAM-dependent 2'-O-MTase domain. Gly273 and Asp354 together coordinate S-adenosyl-L-methionine. Lys394 functions as the Proton acceptor in the catalytic mechanism. Residues 535 to 555 (PNKQRPRGGDRGSRNGNQERL) are disordered.

It carries out the reaction a 5'-end (N(7)-methyl 5'-triphosphoguanosine)-ribonucleoside in mRNA + S-adenosyl-L-methionine = a 5'-end (N(7)-methyl 5'-triphosphoguanosine)-(2'-O-methyl-ribonucleoside) in mRNA + S-adenosyl-L-homocysteine + H(+). In terms of biological role, S-adenosyl-L-methionine-dependent methyltransferase that mediates mRNA cap1 2'-O-ribose methylation to the 5'-cap structure of mRNAs. Methylates the ribose of the first nucleotide of a m(7)GpppG-capped mRNA to produce m(7)GpppNmp (cap1). Cap1 modification is linked to higher levels of translation. The chain is Cap-specific mRNA (nucleoside-2'-O-)-methyltransferase 1A from Caenorhabditis briggsae.